Consider the following 97-residue polypeptide: Cystatin-A (97 aa).

Met1 carries the post-translational modification N-acetylmethionine. The Secondary area of contact signature appears at 46–50 (QVVAG).

This sequence belongs to the cystatin family.

It is found in the cytoplasm. Its function is as follows. This is an intracellular thiol proteinase inhibitor. The protein is Cystatin-A (Csta) of Mus musculus (Mouse).